The following is a 1385-amino-acid chain: Kinesin-like protein KIF15 (1385 aa).

Residues 1–24 form a disordered region; the sequence is MAPGCKSELRNVTNSHSNQPSNED. Over residues 10-21 the composition is skewed to polar residues; it reads RNVTNSHSNQPS. A Kinesin motor domain is found at 26 to 363; that stretch reads AIKVFVRIRP…LNFAQRAKLI (338 aa). 109–116 provides a ligand contact to ATP; it reads GQTGSGKT. The stretch at 368–1385 forms a coiled coil; the sequence is VVNEDTQGNV…NVFLKERKKE (1018 aa). The residue at position 1007 (K1007) is an N6-acetyllysine. Residues S1139 and S1167 each carry the phosphoserine modification. Positions 1222–1243 are disordered; it reads DMKRQGESSSQSRPDSQQLKNE. The span at 1228-1241 shows a compositional bias: polar residues; the sequence is ESSSQSRPDSQQLK.

It belongs to the TRAFAC class myosin-kinesin ATPase superfamily. Kinesin family. KLP2 subfamily. As to quaternary structure, interacts with MKI67 and TPX2. Expressed in sympathetic neurons.

Its subcellular location is the cytoplasm. It localises to the cytoskeleton. The protein resides in the spindle. In terms of biological role, plus-end directed kinesin-like motor enzyme involved in mitotic spindle assembly. In Rattus norvegicus (Rat), this protein is Kinesin-like protein KIF15 (Kif15).